A 184-amino-acid polypeptide reads, in one-letter code: Holliday junction branch migration complex subunit RuvA (184 aa).

The segment at 1 to 62 (MIVGLVGEVL…EDSESLYGFV (62 aa)) is domain I. A domain II region spans residues 63–134 (DINEKKMFDR…ELGEFDISES (72 aa)). Residues 134-135 (SN) are flexible linker. The interval 136-184 (VTSSAFQEASMALQSLGFKKEQIQKALQECTATDTASLVKEALKKIQKL) is domain III.

The protein belongs to the RuvA family. Homotetramer. Forms an RuvA(8)-RuvB(12)-Holliday junction (HJ) complex. HJ DNA is sandwiched between 2 RuvA tetramers; dsDNA enters through RuvA and exits via RuvB. An RuvB hexamer assembles on each DNA strand where it exits the tetramer. Each RuvB hexamer is contacted by two RuvA subunits (via domain III) on 2 adjacent RuvB subunits; this complex drives branch migration. In the full resolvosome a probable DNA-RuvA(4)-RuvB(12)-RuvC(2) complex forms which resolves the HJ.

The protein resides in the cytoplasm. In terms of biological role, the RuvA-RuvB-RuvC complex processes Holliday junction (HJ) DNA during genetic recombination and DNA repair, while the RuvA-RuvB complex plays an important role in the rescue of blocked DNA replication forks via replication fork reversal (RFR). RuvA specifically binds to HJ cruciform DNA, conferring on it an open structure. The RuvB hexamer acts as an ATP-dependent pump, pulling dsDNA into and through the RuvAB complex. HJ branch migration allows RuvC to scan DNA until it finds its consensus sequence, where it cleaves and resolves the cruciform DNA. The polypeptide is Holliday junction branch migration complex subunit RuvA (Nitratiruptor sp. (strain SB155-2)).